The following is a 217-amino-acid chain: Probable cytidylate kinase (217 aa).

9–17 (GPAGSGKST) contacts ATP.

This sequence belongs to the cytidylate kinase family. Type 1 subfamily.

The enzyme catalyses CMP + ATP = CDP + ADP. The catalysed reaction is dCMP + ATP = dCDP + ADP. The sequence is that of Probable cytidylate kinase from Vairimorpha ceranae (strain BRL01) (Microsporidian parasite).